Here is a 450-residue protein sequence, read N- to C-terminus: UPF0210 protein CPF_1748 (450 aa).

This sequence belongs to the UPF0210 family. In terms of assembly, homodimer.

The chain is UPF0210 protein CPF_1748 from Clostridium perfringens (strain ATCC 13124 / DSM 756 / JCM 1290 / NCIMB 6125 / NCTC 8237 / Type A).